Here is a 412-residue protein sequence, read N- to C-terminus: uncharacterized protein (412 aa).

A UmuC domain is found at 20–199 (FFYFDFDAFF…LPIVELPGIG (180 aa)).

Belongs to the DNA polymerase type-Y family.

This is an uncharacterized protein from Mycoplasma pneumoniae (strain ATCC 29342 / M129 / Subtype 1) (Mycoplasmoides pneumoniae).